A 324-amino-acid chain; its full sequence is Thiamine thiazole synthase (324 aa).

Residues Cys-86, 107-108 (EA), Gly-115, and Val-180 each bind substrate. 2,3-didehydroalanine (Cys) is present on Cys-213. Substrate is bound by residues Asp-215, His-230, Met-282, and 292 to 294 (RMG).

It belongs to the THI4 family. As to quaternary structure, homooctamer. Requires Fe cation as cofactor. Post-translationally, during the catalytic reaction, a sulfide is transferred from Cys-213 to a reaction intermediate, generating a dehydroalanine residue.

The protein localises to the cytoplasm. The protein resides in the nucleus. It catalyses the reaction [ADP-thiazole synthase]-L-cysteine + glycine + NAD(+) = [ADP-thiazole synthase]-dehydroalanine + ADP-5-ethyl-4-methylthiazole-2-carboxylate + nicotinamide + 3 H2O + 2 H(+). Functionally, involved in biosynthesis of the thiamine precursor thiazole. Catalyzes the conversion of NAD and glycine to adenosine diphosphate 5-(2-hydroxyethyl)-4-methylthiazole-2-carboxylic acid (ADT), an adenylated thiazole intermediate. The reaction includes an iron-dependent sulfide transfer from a conserved cysteine residue of the protein to a thiazole intermediate. The enzyme can only undergo a single turnover, which suggests it is a suicide enzyme. May have additional roles in adaptation to various stress conditions and in DNA damage tolerance. In Fusarium solani subsp. phaseoli (Nectria haematococca), this protein is Thiamine thiazole synthase (sti35).